Consider the following 215-residue polypeptide: UPF0502 protein CKO_01995 (215 aa).

This sequence belongs to the UPF0502 family.

The sequence is that of UPF0502 protein CKO_01995 from Citrobacter koseri (strain ATCC BAA-895 / CDC 4225-83 / SGSC4696).